Reading from the N-terminus, the 444-residue chain is tRNA modification GTPase MnmE (444 aa).

Residues Arg21, Glu79, and Lys118 each contribute to the (6S)-5-formyl-5,6,7,8-tetrahydrofolate site. The 151-residue stretch at 215–365 (GLNVVIVGKP…LVNEIKTNLK (151 aa)) folds into the TrmE-type G domain. Asn225 contacts K(+). GTP contacts are provided by residues 225–230 (NVGKSS), 244–250 (SDIKGTT), and 269–272 (DTAG). Ser229 is a Mg(2+) binding site. K(+) contacts are provided by Ser244, Ile246, and Thr249. Position 250 (Thr250) interacts with Mg(2+). Lys444 contributes to the (6S)-5-formyl-5,6,7,8-tetrahydrofolate binding site.

The protein belongs to the TRAFAC class TrmE-Era-EngA-EngB-Septin-like GTPase superfamily. TrmE GTPase family. Homodimer. Heterotetramer of two MnmE and two MnmG subunits. K(+) serves as cofactor.

The protein resides in the cytoplasm. In terms of biological role, exhibits a very high intrinsic GTPase hydrolysis rate. Involved in the addition of a carboxymethylaminomethyl (cmnm) group at the wobble position (U34) of certain tRNAs, forming tRNA-cmnm(5)s(2)U34. The sequence is that of tRNA modification GTPase MnmE from Malacoplasma penetrans (strain HF-2) (Mycoplasma penetrans).